A 197-amino-acid chain; its full sequence is RNA-binding protein with multiple splicing (197 aa).

At M1 the chain carries N-acetylmethionine. Residue T12 is modified to Phosphothreonine. The region spanning R24–A101 is the RRM domain. Residues F98 to M105 are interaction with RNA. A Phosphothreonine modification is found at T113.

In terms of assembly, homodimer; each protein chain binds one RNA molecule via the external surface of the homodimer. Interacts with RNA binding proteins MBNL1, RBFOX2, RBM4 and RBM14; the interaction allows cooperative assembly of stable cell-specific alternative splicing regulatory complexes. Also interacts with RBM47, MATR3 and ESRP2. Interacts with SMAD2, SMAD3 and SMAD4; the interactions are direct. MRNA expressed in developing heart, with significantly higher expression in the atria relative to the ventricles.

It localises to the nucleus. It is found in the cytoplasm. The protein localises to the stress granule. Its subcellular location is the P-body. In terms of biological role, RNA binding protein that mediates the regulation of pre-mRNA alternative splicing (AS). Acts either as activator (FLNB, HSPG2, LIPA1, MYOCD, PTPRF and PPFIBP1) or repressor (TPM1, ACTN1, ITGA7, PIEZO1, LSM14B, MBNL1 and MBML2) of splicing events on specific pre-mRNA targets. Together with RNA binding proteins RBFOX2 and MBNL1/2, activates a splicing program associated with differentiated contractile vascular smooth muscle cells (SMC) by regulating AS of numerous pre-mRNA involved in actin cytoskeleton and focal adhesion machineries, suggesting a role in promoting a cell differentiated state. Binds to introns, exons and 3'-UTR associated with tandem CAC trinucleotide motifs separated by a variable spacer region, at a minimum as a dimer. The minimal length of RNA required for RBPMS-binding tandem CAC motifs is 15 nt, with spacing ranging from 1 to 9 nt. Can also bind to CA dinucleotide repeats. Mediates repression of TPM1 exon 3 by binding to CAC tandem repeats in the flanking intronic regions, followed by higher-order oligomerization and heterotypic interactions with other splicing regulators including MBNL1 and RBFOX2, which prevents assembly of ATP-dependent splicing complexes. This Mus musculus (Mouse) protein is RNA-binding protein with multiple splicing.